Here is a 401-residue protein sequence, read N- to C-terminus: L-rhamnonate dehydratase (401 aa).

The substrate site is built by His29 and Arg55. Mg(2+) is bound by residues Asp222, Glu248, and Glu276. His325 acts as the Proton acceptor in catalysis. Glu345 lines the substrate pocket.

It belongs to the mandelate racemase/muconate lactonizing enzyme family. RhamD subfamily. In terms of assembly, homooctamer; tetramer of dimers. Mg(2+) serves as cofactor.

The catalysed reaction is L-rhamnonate = 2-dehydro-3-deoxy-L-rhamnonate + H2O. Functionally, catalyzes the dehydration of L-rhamnonate to 2-keto-3-deoxy-L-rhamnonate (KDR). Can also dehydrate L-lyxonate, L-mannonate and D-gulonate, although less efficiently, but not 2-keto-4-hydroxyheptane-1,7-dioate. The polypeptide is L-rhamnonate dehydratase (rhmD) (Escherichia coli (strain K12)).